The sequence spans 954 residues: E3 ubiquitin-protein ligase MIB2 (954 aa).

One can recognise an MIB/HERC2 1 domain in the interval 1–80; it reads MDLDPYASMQ…AYDLLLYDNA (80 aa). A ZZ-type zinc finger spans residues 86–138; sequence HPNIICDCCKKHGIRGMRWKCKMCFDYDLCTQCYMNNKHDLSHAFERYETAHS. The Zn(2+) site is built by cysteine 91, cysteine 94, cysteine 106, cysteine 109, cysteine 115, cysteine 118, histidine 124, and histidine 128. An MIB/HERC2 2 domain is found at 149 to 227; sequence LTRITLKGTF…KVDLKCTVEA (79 aa). ANK repeat units lie at residues 464–493, 497–526, 530–559, 563–591, 597–626, 631–661, 665–694, 698–726, and 766–795; these read QGRT…TVNL, EGDT…GADL, AKCT…DVNL, HGDT…NIDF, QGFN…QLVD, DGFT…DVNV, RNQT…DVNA, DGDT…EMGS, and RGKS…EQQV. 2 consecutive RING-type zinc fingers follow at residues 830-865 and 910-943; these read CLVC…IKCQ and CPIC…PICR.

The protein resides in the cytoplasm. It catalyses the reaction S-ubiquitinyl-[E2 ubiquitin-conjugating enzyme]-L-cysteine + [acceptor protein]-L-lysine = [E2 ubiquitin-conjugating enzyme]-L-cysteine + N(6)-ubiquitinyl-[acceptor protein]-L-lysine.. The protein operates within protein modification; protein ubiquitination. Functionally, E3 ubiquitin-protein ligase that mediates ubiquitination of Delta receptors, which act as ligands of Notch proteins. Positively regulates the Delta-mediated Notch signaling by ubiquitinating the intracellular domain of Delta, leading to endocytosis of Delta receptors. This Gallus gallus (Chicken) protein is E3 ubiquitin-protein ligase MIB2 (MIB2).